We begin with the raw amino-acid sequence, 377 residues long: Tyrosine-protein phosphatase 2 (377 aa).

In terms of domain architecture, Tyrosine-protein phosphatase spans 27-347; the sequence is IDKEFNFILQ…RFCYLAISEA (321 aa). The segment at 77–137 is disordered; that stretch reads IDDDDDDEDD…EDHGGSGDEG (61 aa). A compositionally biased stretch (acidic residues) spans 78–91; the sequence is DDDDDDEDDNEDDI. Residues 92–102 show a composition bias toward low complexity; that stretch reads IVSNNNNNNNN. Residues 113–123 show a composition bias toward polar residues; it reads GSSGQSDVMSN. Cys281 (phosphocysteine intermediate) is an active-site residue.

It belongs to the protein-tyrosine phosphatase family. Non-receptor class subfamily.

It catalyses the reaction O-phospho-L-tyrosyl-[protein] + H2O = L-tyrosyl-[protein] + phosphate. This Dictyostelium discoideum (Social amoeba) protein is Tyrosine-protein phosphatase 2 (ptpB).